We begin with the raw amino-acid sequence, 262 residues long: Cell division protein ZapD (262 aa).

This sequence belongs to the ZapD family. As to quaternary structure, interacts with FtsZ.

It localises to the cytoplasm. In terms of biological role, cell division factor that enhances FtsZ-ring assembly. Directly interacts with FtsZ and promotes bundling of FtsZ protofilaments, with a reduction in FtsZ GTPase activity. In Nitrosomonas europaea (strain ATCC 19718 / CIP 103999 / KCTC 2705 / NBRC 14298), this protein is Cell division protein ZapD.